Reading from the N-terminus, the 301-residue chain is Probable alpha-L-glutamate ligase (301 aa).

The ATP-grasp domain maps to Met104–Glu287. Residues Lys141, Glu178 to Phe179, Asp187, and Arg211 to Asn213 each bind ATP. 3 residues coordinate Mg(2+): Asp248, Glu260, and Asn262. The Mn(2+) site is built by Asp248, Glu260, and Asn262.

Belongs to the RimK family. It depends on Mg(2+) as a cofactor. Mn(2+) serves as cofactor.

The chain is Probable alpha-L-glutamate ligase from Aliivibrio fischeri (strain MJ11) (Vibrio fischeri).